A 128-amino-acid chain; its full sequence is Large ribosomal subunit protein bL12 (128 aa).

It belongs to the bacterial ribosomal protein bL12 family. As to quaternary structure, homodimer. Part of the ribosomal stalk of the 50S ribosomal subunit. Forms a multimeric L10(L12)X complex, where L10 forms an elongated spine to which 2 to 4 L12 dimers bind in a sequential fashion. Binds GTP-bound translation factors.

In terms of biological role, forms part of the ribosomal stalk which helps the ribosome interact with GTP-bound translation factors. Is thus essential for accurate translation. The chain is Large ribosomal subunit protein bL12 from Corynebacterium aurimucosum (strain ATCC 700975 / DSM 44827 / CIP 107346 / CN-1) (Corynebacterium nigricans).